A 417-amino-acid polypeptide reads, in one-letter code: MSEKWDSNSSESWNHIWSGNDTQHHWYSDINITYVNYYLHQPQVAAVFISSYLLIFVLCMVGNTVVCFIVIRNRHMHTVTNFFILNLAISDLLVGIFCMPITLLDNIIAGWPFGSSMCKISGLVQGISVAASVFTLVAIAVDRFRCVVYPFKPKLTVKTAFVTIVIIWGLAIAIMTPSAIMLHVQEEKYYRVRLSSHNKTSTVYWCREDWPRHEMRRIYTTVLFATIYLAPLSLIVIMYARIGASLFKTAAHCTGKQRPVQWHVSKKKQKVIKMLLTVALLFILSWLPLWTLMMLSDYTDLSPNKLRIINIYIYPFAHWLAFCNSSVNPIIYGFFNENFRNGFQDAFQICQKKAKPQEAYSLRAKRNIVINTSGLLVQEPVSQNPGGENLGCGKSADNPTQESLIEEMGEATNSTVA.

At 1–45 (MSEKWDSNSSESWNHIWSGNDTQHHWYSDINITYVNYYLHQPQVA) the chain is on the extracellular side. N-linked (GlcNAc...) asparagine glycans are attached at residues Asn-8, Asn-20, and Asn-31. A helical membrane pass occupies residues 46–66 (AVFISSYLLIFVLCMVGNTVV). Residues 67 to 82 (CFIVIRNRHMHTVTNF) lie on the Cytoplasmic side of the membrane. The chain crosses the membrane as a helical span at residues 83-103 (FILNLAISDLLVGIFCMPITL). At 104 to 119 (LDNIIAGWPFGSSMCK) the chain is on the extracellular side. An intrachain disulfide couples Cys-118 to Cys-206. Residues 120 to 140 (ISGLVQGISVAASVFTLVAIA) form a helical membrane-spanning segment. Residues 141–160 (VDRFRCVVYPFKPKLTVKTA) are Cytoplasmic-facing. A helical transmembrane segment spans residues 161–181 (FVTIVIIWGLAIAIMTPSAIM). Topologically, residues 182-217 (LHVQEEKYYRVRLSSHNKTSTVYWCREDWPRHEMRR) are extracellular. Asn-198 is a glycosylation site (N-linked (GlcNAc...) asparagine). A helical membrane pass occupies residues 218 to 238 (IYTTVLFATIYLAPLSLIVIM). The Cytoplasmic portion of the chain corresponds to 239-274 (YARIGASLFKTAAHCTGKQRPVQWHVSKKKQKVIKM). The helical transmembrane segment at 275–295 (LLTVALLFILSWLPLWTLMML) threads the bilayer. The Extracellular segment spans residues 296 to 310 (SDYTDLSPNKLRIIN). Residues 311-331 (IYIYPFAHWLAFCNSSVNPII) form a helical membrane-spanning segment. Topologically, residues 332 to 417 (YGFFNENFRN…MGEATNSTVA (86 aa)) are cytoplasmic. The tract at residues 382–401 (SQNPGGENLGCGKSADNPTQ) is disordered.

It belongs to the G-protein coupled receptor 1 family.

The protein resides in the cell membrane. In terms of biological role, receptor for NPAF (A-18-F-amide) and NPFF (F-8-F-amide) neuropeptides, also known as morphine-modulating peptides. Can also be activated by a variety of naturally occurring or synthetic FMRF-amide like ligands. This receptor mediates its action by association with G proteins that activate a phosphatidylinositol-calcium second messenger system. The chain is Neuropeptide FF receptor 2 (Npffr2) from Mus musculus (Mouse).